The primary structure comprises 341 residues: uncharacterized protein (341 aa).

Residues 153 to 179 (AYTLSEKVMNAEREAEETRETIIREAH) are a coiled coil. A compositionally biased stretch (polar residues) spans 319 to 335 (EQLQNPAPESAPSTSKT). A disordered region spans residues 319 to 341 (EQLQNPAPESAPSTSKTLRSKNP).

This is an uncharacterized protein from Coxiella burnetii (strain RSA 493 / Nine Mile phase I).